The primary structure comprises 230 residues: Lipoprotein-releasing system ATP-binding protein LolD (230 aa).

The region spanning Leu6–Leu230 is the ABC transporter domain. Gly42–Ser49 contributes to the ATP binding site.

The protein belongs to the ABC transporter superfamily. Lipoprotein translocase (TC 3.A.1.125) family. As to quaternary structure, the complex is composed of two ATP-binding proteins (LolD) and two transmembrane proteins (LolC and LolE).

It localises to the cell inner membrane. Part of the ABC transporter complex LolCDE involved in the translocation of mature outer membrane-directed lipoproteins, from the inner membrane to the periplasmic chaperone, LolA. Responsible for the formation of the LolA-lipoprotein complex in an ATP-dependent manner. This is Lipoprotein-releasing system ATP-binding protein LolD from Hydrogenovibrio crunogenus (strain DSM 25203 / XCL-2) (Thiomicrospira crunogena).